The chain runs to 704 residues: Translational regulator orb2 (704 aa).

The interval 1–64 (MDSLKLPKAN…PPGLGSSTPI (64 aa)) is disordered. The interval 1 to 87 (MDSLKLPKAN…ILQSFHHSKH (87 aa)) is gln/His-rich. Low complexity predominate over residues 9-42 (ANSATSSASGSNSNLSGSTSASASAATSPTSSGT). Residues Ser-74, Ser-88, and Ser-100 each carry the phosphoserine modification. Disordered regions lie at residues 82-106 (FHHSKHSPSGGASGGGDASPTSNLL), 166-266 (LPNL…GVSP), and 417-438 (SPSRLSPHSPHSPIQGGNGGNV). The tract at residues 163–240 (CGGLPNLNLN…PSSPGGGGGG (78 aa)) is gln/His-rich. Low complexity-rich tracts occupy residues 176–205 (QLHQQQHQQQHQQHQQHQQQQQLHQHQQQL), 218–233 (QQQQLRESGGSHSPSS), and 417–429 (SPSRLSPHSPHSP). Ser-425 and Ser-428 each carry phosphoserine. RRM domains lie at 447 to 538 (RKVF…PWRL) and 555 to 637 (KTVF…PYVL).

In terms of assembly, monomer. Upon neuronal stimulation, forms stable amyloid-like oligomers composed of isoform A and isoform B which are required for formation of persistent long-term memory. Isoform A is critical for oligomer formation. Phe-5 of isoform A is required for amyloid-like oligomerization. Rapidly forms amyloids and toxic intermediates are extremely transient. Unlike in the adult nervous system, remains monomeric in the early embryo. Interacts with the translational regulator bol. Interacts with Tob; the interaction is enhanced by neuronal stimulation, stabilizes isoform A and induces oligomerization. In terms of processing, phosphorylation regulates interaction with Tob and oligomerization. Protein phosphatase 2A keeps both Orb2 and Tob in an unphosphorylated form. Following synaptic activation, unphosphorylated Orb2 is bound and stabilized by unphosphorylated Tob. Tob recruits activated LimK which phosphorylates both Orb2 and Tob and enhances Orb2 oligomerization. Broadly expressed throughout the nervous system of embryo, larva and adult including the ventral nerve cord and brain (at protein level). In early embryos, deposited maternally and distributed uniformly throughout the embryo until the extended germband stage. By mid-embryogenesis, highest levels are found in the central and peripheral nervous systems with lower expression also detected in the ectoderm and mesoderm. In adults, high levels are present in the head and body of both sexes with higher expression in testis than ovary. In the ovary, expressed in both germ and follicle cells. In adult head, predominantly neuronal with broad expression throughout the brain and ventral ganglia including the mushroom body.

The protein resides in the perikaryon. It localises to the cell projection. Its subcellular location is the axon. It is found in the dendrite. The protein localises to the synapse. The protein resides in the cytoplasm. It localises to the perinuclear region. In terms of biological role, RNA-binding protein involved in translational regulation and required for long-term memory. Required in mushroom body gamma neurons for long-term memory in male courtship. Binds to mRNA 3'-UTRs. In its monomeric form, acts as a translational repressor of genes involved in neuronal growth, synapse formation and protein turnover. In its amyloid-like oligomeric form, acts as a translational activator. The monomeric form reduces poly(A) tail length and destabilizes mRNA while the oligomeric form protects and elongates the poly(A) tail and stabilizes mRNA. Involved in asymmetric cell division in the central nervous system. Plays a role in synapse formation and morphology at neuromuscular junctions by modulating the translation of the tumor suppressor brat. Required for the progression of spermatogenesis through meiosis and for sperm differentiation. During sperm differentiation, required to asymmetrically localize and activate the translation of protein kinase aPKC mRNAs which is necessary for spermatid cyst polarization. Also required during spermatid cyst polarization for localization and translation of its own mRNA. Its function is as follows. Required for initial memory acquisition. Following subsequent late dopaminergic pathway activation, recruits isoform B into a complex to activate translation of CaMKII which is required for long-term memory consolidation. The sequence is that of Translational regulator orb2 from Drosophila melanogaster (Fruit fly).